Reading from the N-terminus, the 209-residue chain is Ribonuclease HII (209 aa).

The RNase H type-2 domain maps to 19–208 (GLVAGVDEAG…VARALQAPVA (190 aa)). A divalent metal cation contacts are provided by Asp25, Glu26, and Asp117.

This sequence belongs to the RNase HII family. Mn(2+) serves as cofactor. The cofactor is Mg(2+).

The protein resides in the cytoplasm. The catalysed reaction is Endonucleolytic cleavage to 5'-phosphomonoester.. Its function is as follows. Endonuclease that specifically degrades the RNA of RNA-DNA hybrids. The chain is Ribonuclease HII from Acidovorax ebreus (strain TPSY) (Diaphorobacter sp. (strain TPSY)).